A 157-amino-acid polypeptide reads, in one-letter code: Protein Smg homolog (157 aa).

This sequence belongs to the Smg family.

The sequence is that of Protein Smg homolog from Shewanella frigidimarina (strain NCIMB 400).